Consider the following 363-residue polypeptide: Adenosine deaminase (363 aa).

Histidine 42 and histidine 44 together coordinate Zn(2+). Residues histidine 44–aspartate 46, aspartate 172, and glycine 201 each bind a purine D-ribonucleoside. The tract at residues isoleucine 170 to alanine 184 is gating helix loop; regulates binding affinity for substrates and thus substrate selectivity. Histidine 226 contributes to the Zn(2+) binding site. Residues glutamate 229, histidine 253, and aspartate 310 each coordinate a purine D-ribonucleoside. Aspartate 310 contributes to the Zn(2+) binding site.

Belongs to the metallo-dependent hydrolases superfamily. Adenosine and AMP deaminases family. Requires Zn(2+) as cofactor.

The enzyme catalyses adenosine + H2O + H(+) = inosine + NH4(+). The catalysed reaction is S-methyl-5'-thioadenosine + H2O + H(+) = S-methyl-5'-thioinosine + NH4(+). It participates in purine metabolism; purine nucleoside salvage. With respect to regulation, inhibited by coformycin and methylthiocoformycin (MT-coformycin). In terms of biological role, catalyzes the hydrolytic deamination of adenosine to produce inosine. Unlike mammalian adenosine deaminases, also catalyzes the deamination of 5'-methylthioadenosine (MTA), a by-product of polyamine biosynthesis, to produce 5'-methylthioinosine (MTI). Plays an essential role in the purine salvage pathway which allows the parasite to use host cell purines for the synthesis of nucleic acids. This chain is Adenosine deaminase, found in Plasmodium vivax (strain Salvador I).